The sequence spans 104 residues: Large ribosomal subunit protein uL24 (104 aa).

Belongs to the universal ribosomal protein uL24 family. As to quaternary structure, part of the 50S ribosomal subunit.

Its function is as follows. One of two assembly initiator proteins, it binds directly to the 5'-end of the 23S rRNA, where it nucleates assembly of the 50S subunit. In terms of biological role, one of the proteins that surrounds the polypeptide exit tunnel on the outside of the subunit. This chain is Large ribosomal subunit protein uL24, found in Methylorubrum extorquens (strain PA1) (Methylobacterium extorquens).